Here is a 473-residue protein sequence, read N- to C-terminus: Cyprosin (473 aa).

Positions 1–33 (LKKRKVNILNHPGEHAGSNDANARRKYGVRGNF) are cleaved as a propeptide — activation peptide. Residues 51 to 470 (YFGEIGIGTP…DYGNLRVGFA (420 aa)) form the Peptidase A1 domain. Aspartate 69 is an active-site residue. 2 disulfides stabilise this stretch: cysteine 82/cysteine 88 and cysteine 247/cysteine 251. Aspartate 256 is a catalytic residue. The Saposin B-type domain occupies 281–384 (VMSQQCKSLV…DKLCERLPSP (104 aa)). Disulfide bonds link cysteine 286–cysteine 378, cysteine 311–cysteine 350, cysteine 317–cysteine 347, and cysteine 392–cysteine 429. The N-linked (GlcNAc...) asparagine glycan is linked to asparagine 364.

The protein belongs to the peptidase A1 family. As to expression, mostly present in the violet parts of styles and corollas of mature flowers.

This Cynara cardunculus (Cardoon) protein is Cyprosin (CYPRO1).